Reading from the N-terminus, the 167-residue chain is Large ribosomal subunit protein bL9 (167 aa).

The protein belongs to the bacterial ribosomal protein bL9 family.

Binds to the 23S rRNA. The sequence is that of Large ribosomal subunit protein bL9 from Nitratidesulfovibrio vulgaris (strain ATCC 29579 / DSM 644 / CCUG 34227 / NCIMB 8303 / VKM B-1760 / Hildenborough) (Desulfovibrio vulgaris).